We begin with the raw amino-acid sequence, 229 residues long: Large ribosomal subunit protein uL1 (229 aa).

It belongs to the universal ribosomal protein uL1 family. As to quaternary structure, part of the 50S ribosomal subunit.

Functionally, binds directly to 23S rRNA. The L1 stalk is quite mobile in the ribosome, and is involved in E site tRNA release. In terms of biological role, protein L1 is also a translational repressor protein, it controls the translation of the L11 operon by binding to its mRNA. The polypeptide is Large ribosomal subunit protein uL1 (Clostridium beijerinckii (strain ATCC 51743 / NCIMB 8052) (Clostridium acetobutylicum)).